The sequence spans 285 residues: RNA 5'-monophosphate methyltransferase (285 aa).

Residues 1–28 form a disordered region; the sequence is MAATQELSKGGVEEAVEEDDPAALKPGA. S-adenosyl-L-methionine-binding positions include Arg46, Asn77, Asp111, 136-137, and Met165; that span reads DI. Positions 53-275 constitute a Bin3-type SAM domain; sequence ELLRQLFPPE…KHTEETQAIP (223 aa).

The protein belongs to the methyltransferase superfamily. In terms of assembly, interacts with DICER1; the interaction may be mediated by RNA.

The protein localises to the cytoplasm. It carries out the reaction a 5'-end 5'-phospho-ribonucleoside-RNA + S-adenosyl-L-methionine = a 5'-end (5'-methylphospho)-ribonucleoside-RNA + S-adenosyl-L-homocysteine. The catalysed reaction is a 5'-end 5'-phospho-ribonucleoside-RNA + 2 S-adenosyl-L-methionine = a 5'-end (5'-bismethylphospho)-ribonucleoside-RNA + 2 S-adenosyl-L-homocysteine. Functionally, O-methyltransferase that specifically monomethylates 5'-monophosphate of cytoplasmic histidyl tRNA (tRNA(His)), acting as a capping enzyme by protecting tRNA(His) from cleavage by DICER1. Also able, with less efficiently, to methylate the 5' monophosphate of a subset of pre-miRNAs, acting as a negative regulator of miRNA processing. The 5' monophosphate of pre-miRNAs is recognized by DICER1 and is required for pre-miRNAs processing: methylation at this position reduces the processing of pre-miRNAs by DICER1. Was also reported to mediate dimethylation of pre-miR-145; however dimethylation cannot be reproduced by another group which observes a monomethylation of pre-miR-145. The polypeptide is RNA 5'-monophosphate methyltransferase (Rattus norvegicus (Rat)).